Consider the following 465-residue polypeptide: Hexokinase-4 (465 aa).

A Hexokinase domain is found at 10 to 454; that stretch reads AAKKEKVEQI…SGRGAALVSA (445 aa). The hexokinase small subdomain stretch occupies residues 67–203; it reads EGSEVGDFLS…DFEMDVVAMV (137 aa). 78 to 83 contributes to the ATP binding site; the sequence is DLGGTN. Substrate-binding positions include 151 to 152, 168 to 169, and 204 to 205; these read SF, TK, and ND. A hexokinase large subdomain region spans residues 204-443; that stretch reads NDTVATMISC…CEITFIESEE (240 aa). T228 contributes to the ATP binding site. Positions 231, 256, and 290 each coordinate substrate. ATP contacts are provided by residues 295–296, 332–336, and 411–415; these read GK, TRFVS, and SVYKL.

It belongs to the hexokinase family. In terms of assembly, monomer. Interacts with MIDN; the interaction occurs preferentially at low glucose levels and results in inhibition of hexokinase activity. Interacts with GCKR; leading to sequestration in the nucleus.

It localises to the cytoplasm. It is found in the nucleus. The protein localises to the mitochondrion. It carries out the reaction a D-hexose + ATP = a D-hexose 6-phosphate + ADP + H(+). The enzyme catalyses D-fructose + ATP = D-fructose 6-phosphate + ADP + H(+). It catalyses the reaction D-glucose + ATP = D-glucose 6-phosphate + ADP + H(+). The catalysed reaction is D-mannose + ATP = D-mannose 6-phosphate + ADP + H(+). The protein operates within carbohydrate metabolism; hexose metabolism. It functions in the pathway carbohydrate degradation; glycolysis; D-glyceraldehyde 3-phosphate and glycerone phosphate from D-glucose: step 1/4. With respect to regulation, subject to allosteric regulation. Low glucose and high fructose-6-phosphate triggers association with the inhibitor GCKR followed by sequestration in the nucleus. Catalyzes the phosphorylation of hexose, such as D-glucose, D-fructose and D-mannose, to hexose 6-phosphate (D-glucose 6-phosphate, D-fructose 6-phosphate and D-mannose 6-phosphate, respectively). Compared to other hexokinases, has a weak affinity for D-glucose, and is effective only when glucose is abundant. Mainly expressed in pancreatic beta cells and the liver and constitutes a rate-limiting step in glucose metabolism in these tissues. Since insulin secretion parallels glucose metabolism and the low glucose affinity of GCK ensures that it can change its enzymatic activity within the physiological range of glucose concentrations, GCK acts as a glucose sensor in the pancreatic beta cell. In pancreas, plays an important role in modulating insulin secretion. In liver, helps to facilitate the uptake and conversion of glucose by acting as an insulin-sensitive determinant of hepatic glucose usage. Required to provide D-glucose 6-phosphate for the synthesis of glycogen. Mediates the initial step of glycolysis by catalyzing phosphorylation of D-glucose to D-glucose 6-phosphate. In Homo sapiens (Human), this protein is Hexokinase-4.